Reading from the N-terminus, the 175-residue chain is Large ribosomal subunit protein bL17m (175 aa).

The transit peptide at 1–8 directs the protein to the mitochondrion; that stretch reads MRLSVCAA. The tract at residues 155-175 is disordered; sequence DLSQSQEASNHSSHTAQTPGI. A compositionally biased stretch (polar residues) spans 157 to 175; it reads SQSQEASNHSSHTAQTPGI.

Belongs to the bacterial ribosomal protein bL17 family. As to quaternary structure, component of the mitochondrial ribosome large subunit (39S) which comprises a 16S rRNA and about 50 distinct proteins.

It localises to the mitochondrion. This is Large ribosomal subunit protein bL17m (MRPL17) from Pongo abelii (Sumatran orangutan).